The following is a 473-amino-acid chain: MTPEEWTYLMVLLISIPVGFLFKKAGPGLKRWGAAAVGLGLTLFTCGPHSLHSLITILGTWALIQAQPCSCHALALAWTFSYLLFFRALSLLGLPTPTPFTNAVQLLLTLKLVSLASEVQDLHLAQRKEIASGFHKEPTLGLLPEVPSLMETLSYSYCYVGIMTGPFFRYRTYLDWLEQPFPEAVPSLRPLLRRAWPAPLFGLLFLLSSHLFPLEAVREDAFYARPLPTRLFYMIPVFFAFRMRFYVAWIAAECGCIAAGFGAYPVAAKARAGGGPTLQCPPPSSPEIAASLEYDYETIRNIDCYGTDFCVRVRDGMRYWNMTVQWWLAQYIYKSAPFRSYVLRSAWTMLLSAYWHGLHPGYYLSFMTIPLCLAAEGYLESALRRHLSPGGQKAWDWVHWFLKMRAYDYMCMGFVLLSMADTLRYWASIYFWVHFLALACLGLGLVLGGGSPSKRKTPSQATSSQAKEKLREE.

The Cytoplasmic segment spans residues 1–5 (MTPEE). A helical membrane pass occupies residues 6–22 (WTYLMVLLISIPVGFLF). Residues 23 to 33 (KKAGPGLKRWG) lie on the Lumenal side of the membrane. A helical membrane pass occupies residues 34–57 (AAAVGLGLTLFTCGPHSLHSLITI). The Cytoplasmic segment spans residues 58-73 (LGTWALIQAQPCSCHA). Residues 74-93 (LALAWTFSYLLFFRALSLLG) traverse the membrane as a helical segment. Over 94-194 (LPTPTPFTNA…VPSLRPLLRR (101 aa)) the chain is Lumenal. The helical transmembrane segment at 195 to 212 (AWPAPLFGLLFLLSSHLF) threads the bilayer. At 213-231 (PLEAVREDAFYARPLPTRL) the chain is on the cytoplasmic side. A helical transmembrane segment spans residues 232-261 (FYMIPVFFAFRMRFYVAWIAAECGCIAAGF). The Lumenal segment spans residues 262–426 (GAYPVAAKAR…LSMADTLRYW (165 aa)). The N-linked (GlcNAc...) asparagine glycan is linked to N321. The helical transmembrane segment at 427 to 447 (ASIYFWVHFLALACLGLGLVL) threads the bilayer. Residues 448–473 (GGGSPSKRKTPSQATSSQAKEKLREE) are Cytoplasmic-facing. Residues 451 to 473 (SPSKRKTPSQATSSQAKEKLREE) are disordered.

This sequence belongs to the membrane-bound acyltransferase family. Interacts with SPTSSA; the interaction facilitates MBOAT7 location to mitochondria-associated membranes (MAMs).

It localises to the endoplasmic reticulum membrane. It carries out the reaction a 1-acyl-sn-glycero-3-phospho-(1D-myo-inositol) + an acyl-CoA = a 1,2-diacyl-sn-glycero-3-phospho-(1D-myo-inositol) + CoA. The catalysed reaction is 1-octadecanoyl-sn-glycero-3-phospho-(1D-myo-inositol) + (5Z,8Z,11Z,14Z)-eicosatetraenoyl-CoA = 1-octadecanoyl-2-(5Z,8Z,11Z,14Z-eicosatetraenoyl)-sn-glycero-3-phospho-(1D-myo-inositol) + CoA. The enzyme catalyses a 1-acyl-sn-glycero-3-phospho-(1D-myo-inositol) + (5Z,8Z,11Z,14Z)-eicosatetraenoyl-CoA = a 1-acyl-2-(5Z,8Z,11Z,14Z-eicosatetraenoyl)-sn-glycero-3-phospho-(1D-myo-inositol) + CoA. It catalyses the reaction (5Z,8Z,11Z,14Z)-eicosatetraenoyl-CoA + 1-hexadecanoyl-sn-glycero-3-phosphocholine = 1-hexadecanoyl-2-(5Z,8Z,11Z,14Z-eicosatetraenoyl)-sn-glycero-3-phosphocholine + CoA. It participates in lipid metabolism; phospholipid metabolism. Acyltransferase which catalyzes the transfer of an acyl group from an acyl-CoA to a lysophosphatidylinositol (1-acylglycerophosphatidylinositol or LPI) leading to the production of a phosphatidylinositol (1,2-diacyl-sn-glycero-3-phosphoinositol or PI) and participates in the reacylation step of the phospholipid remodeling pathway also known as the Lands cycle. Prefers arachidonoyl-CoA as the acyl donor, thus contributing to the regulation of free levels arachidonic acid in cell. In liver, participates in the regulation of triglyceride metabolism through the phosphatidylinositol acyl-chain remodeling regulation. This is Membrane-bound acylglycerophosphatidylinositol O-acyltransferase MBOAT7 from Mus musculus (Mouse).